We begin with the raw amino-acid sequence, 969 residues long: Probable Rho-type GTPase-activating protein 3 (969 aa).

LIM zinc-binding domains lie at 17–81 (TVCF…CTAC) and 76–135 (HTCT…RHPS). 3 disordered regions span residues 170–223 (IEIM…ADSL), 348–459 (ATSP…VEEL), and 613–646 (TSSK…SPNL). The segment covering 193–202 (ETPTNMSQAE) has biased composition (polar residues). Low complexity-rich tracts occupy residues 212 to 223 (DSNLASNSADSL) and 350 to 361 (SPFRPFSPSYRS). Composition is skewed to polar residues over residues 369 to 392 (TRSP…SFAQ) and 418 to 432 (LSET…SLGS). A compositionally biased stretch (basic and acidic residues) spans 450–459 (SERDSDVEEL). Residues 613–623 (TSSKNTTSSIN) show a composition bias toward low complexity. A compositionally biased stretch (polar residues) spans 624-637 (PLTAVSSNSGQSSG). The Phorbol-ester/DAG-type zinc-finger motif lies at 697-744 (DHVFHVNAIFKPSRCYICSESVWGSELRCFHCSISCHSRCLKRLFAES). Residues 780–966 (RSLENQLKIE…FMLDNVDKIL (187 aa)) enclose the Rho-GAP domain.

As to quaternary structure, interacts with dil1.

Its subcellular location is the cell tip. GTPase-activating protein for Rho-type proteins. This is Probable Rho-type GTPase-activating protein 3 (rga3) from Schizosaccharomyces pombe (strain 972 / ATCC 24843) (Fission yeast).